The sequence spans 343 residues: N-acetyl-gamma-glutamyl-phosphate reductase (343 aa).

Residue Cys-147 is part of the active site.

This sequence belongs to the NAGSA dehydrogenase family. Type 1 subfamily.

The protein localises to the cytoplasm. It catalyses the reaction N-acetyl-L-glutamate 5-semialdehyde + phosphate + NADP(+) = N-acetyl-L-glutamyl 5-phosphate + NADPH + H(+). The protein operates within amino-acid biosynthesis; L-arginine biosynthesis; N(2)-acetyl-L-ornithine from L-glutamate: step 3/4. Functionally, catalyzes the NADPH-dependent reduction of N-acetyl-5-glutamyl phosphate to yield N-acetyl-L-glutamate 5-semialdehyde. This Listeria welshimeri serovar 6b (strain ATCC 35897 / DSM 20650 / CCUG 15529 / CIP 8149 / NCTC 11857 / SLCC 5334 / V8) protein is N-acetyl-gamma-glutamyl-phosphate reductase.